The chain runs to 894 residues: Alpha-actinin-2 (894 aa).

Residues 1-254 (MNQIEPGVQY…IMTYVSCFYH (254 aa)) form an actin-binding region. Calponin-homology (CH) domains follow at residues 38–142 (KQQR…LRFA) and 151–257 (TSAK…HAFA). The residue at position 237 (threonine 237) is a Phosphothreonine. Spectrin repeat units follow at residues 281–391 (RLME…WLLN), 401–506 (HLAE…ALER), 516–627 (QLHL…SLQE), and 637–740 (RLRR…EVET). EF-hand domains are found at residues 753-788 (EQMN…MGYD) and 789-824 (LGEA…ETAD). The Ca(2+) site is built by aspartate 766, asparagine 770, aspartate 777, aspartate 802, asparagine 804, and threonine 808.

This sequence belongs to the alpha-actinin family. Homodimer; antiparallel. Also forms heterodimers with ACTN3. Interacts with ADAM12, MYOZ1, MYOZ2 and MYOZ3. Interacts via its C-terminal region with the LDB3 PDZ domain. Interacts with XIRP2. Interacts with DST (via N-terminus). Interacts with PARVB. Interacts with SYNPO2. In terms of processing, ubiquitinated by FBXL22, leading to proteasomal degradation.

It is found in the cytoplasm. The protein resides in the myofibril. It localises to the sarcomere. Its subcellular location is the z line. F-actin cross-linking protein which is thought to anchor actin to a variety of intracellular structures. This is a bundling protein. The protein is Alpha-actinin-2 (Actn2) of Mus musculus (Mouse).